A 361-amino-acid polypeptide reads, in one-letter code: tRNA-specific 2-thiouridylase MnmA (361 aa).

ATP is bound by residues 8 to 15 (AMSGGVDS) and Met-35. Positions 95-97 (NPD) are interaction with target base in tRNA. Cys-100 serves as the catalytic Nucleophile. Cys-100 and Cys-196 are joined by a disulfide. ATP is bound at residue Gly-124. Residues 146–148 (KDQ) form an interaction with tRNA region. The active-site Cysteine persulfide intermediate is Cys-196. Residues 303 to 304 (RY) are interaction with tRNA.

The protein belongs to the MnmA/TRMU family.

Its subcellular location is the cytoplasm. It carries out the reaction S-sulfanyl-L-cysteinyl-[protein] + uridine(34) in tRNA + AH2 + ATP = 2-thiouridine(34) in tRNA + L-cysteinyl-[protein] + A + AMP + diphosphate + H(+). In terms of biological role, catalyzes the 2-thiolation of uridine at the wobble position (U34) of tRNA, leading to the formation of s(2)U34. This Chlamydia felis (strain Fe/C-56) (Chlamydophila felis) protein is tRNA-specific 2-thiouridylase MnmA.